The sequence spans 197 residues: RNA pyrophosphohydrolase (197 aa).

Residues 6–154 (GYRPNVGIVL…KREVYQLALS (149 aa)) form the Nudix hydrolase domain. A Nudix box motif is present at residues 38–59 (GGIQHGESPEQAMYRELHEEVG).

It belongs to the Nudix hydrolase family. RppH subfamily. Requires a divalent metal cation as cofactor.

Functionally, accelerates the degradation of transcripts by removing pyrophosphate from the 5'-end of triphosphorylated RNA, leading to a more labile monophosphorylated state that can stimulate subsequent ribonuclease cleavage. The protein is RNA pyrophosphohydrolase of Polynucleobacter necessarius subsp. necessarius (strain STIR1).